An 829-amino-acid chain; its full sequence is DNA ligase (829 aa).

NAD(+) contacts are provided by residues Asp-38–Asp-42, Ser-87–Leu-88, and Glu-127. Catalysis depends on Lys-129, which acts as the N6-AMP-lysine intermediate. NAD(+) contacts are provided by Arg-150, Glu-187, Lys-305, and Lys-329. 4 residues coordinate Zn(2+): Cys-455, Cys-458, Cys-473, and Cys-479. Residues Glu-534 to Lys-564 form a disordered region. The BRCT domain occupies Gly-752–Cys-829.

Belongs to the NAD-dependent DNA ligase family. LigA subfamily. Mg(2+) serves as cofactor. Mn(2+) is required as a cofactor.

It carries out the reaction NAD(+) + (deoxyribonucleotide)n-3'-hydroxyl + 5'-phospho-(deoxyribonucleotide)m = (deoxyribonucleotide)n+m + AMP + beta-nicotinamide D-nucleotide.. Functionally, DNA ligase that catalyzes the formation of phosphodiester linkages between 5'-phosphoryl and 3'-hydroxyl groups in double-stranded DNA using NAD as a coenzyme and as the energy source for the reaction. It is essential for DNA replication and repair of damaged DNA. The sequence is that of DNA ligase from Neisseria gonorrhoeae (strain ATCC 700825 / FA 1090).